A 236-amino-acid chain; its full sequence is Rab-like protein 3 (236 aa).

The segment at 1 to 236 (MASLDRVKVL…AGTLKSLHYD (236 aa)) is small GTPase-like. Residues 16-21 (GVGKSS), 148-150 (KLD), and 179-180 (DC) contribute to the GTP site.

The protein belongs to the small GTPase superfamily. Rab family. Homodimer. Interacts with GPR89; the interaction stabilizes GPR89. Interacts with RAP1GDS1.

Functionally, required for KRAS signaling regulation and modulation of cell proliferation. Regulator of KRAS prenylation, and probably prenylation of other small GTPases. Required for lymphocyte development and function. Not required for myeloid cell development. This chain is Rab-like protein 3 (RABL3), found in Homo sapiens (Human).